The primary structure comprises 363 residues: Spermidine/putrescine import ATP-binding protein PotA (363 aa).

The ABC transporter domain maps to 9 to 239 (IDVRNAVKRY…PANRFVADFI (231 aa)). Residue 41-48 (GPSGCGKT) participates in ATP binding.

This sequence belongs to the ABC transporter superfamily. Spermidine/putrescine importer (TC 3.A.1.11.1) family. The complex is composed of two ATP-binding proteins (PotA), two transmembrane proteins (PotB and PotC) and a solute-binding protein (PotD).

It localises to the cell inner membrane. The enzyme catalyses ATP + H2O + polyamine-[polyamine-binding protein]Side 1 = ADP + phosphate + polyamineSide 2 + [polyamine-binding protein]Side 1.. In terms of biological role, part of the ABC transporter complex PotABCD involved in spermidine/putrescine import. Responsible for energy coupling to the transport system. This chain is Spermidine/putrescine import ATP-binding protein PotA, found in Roseobacter denitrificans (strain ATCC 33942 / OCh 114) (Erythrobacter sp. (strain OCh 114)).